A 1123-amino-acid polypeptide reads, in one-letter code: MWGDSRPANRTGPFRGSQEERFAPGWNRDYPPPPLKSHAQERHSGNFPGRDSLPFDFQGHSGPPFANVEEHSFSYGARDGPHGDYRGGEGPGHDFRGGDFSSSDFQSRDSSQLDFRGRDIHSGDFRDREGPPMDYRGGDGTSMDYRGREAPHMNYRDRDAHAVDFRGRDAPPSDFRGRGTYDLDFRGRDGSHADFRGRDLSDLDFRAREQSRSDFRNRDVSDLDFRDKDGTQVDFRGRGSGTTDLDFRDRDTPHSDFRGRHRSRTDQDFRGREMGSCMEFKDREMPPVDPNILDYIQPSTQDREHSGMNVNRREESTHDHTIERPAFGIQKGEFEHSETREGETQGVAFEHESPADFQNSQSPVQDQDKSQLSGREEQSSDAGLFKEEGGLDFLGRQDTDYRSMEYRDVDHRLPGSQMFGYGQSKSFPEGKTARDAQRDLQDQDYRTGPSEEKPSRLIRLSGVPEDATKEEILNAFRTPDGMPVKNLQLKEYNTGYDYGYVCVEFSLLEDAIGCMEANQGTLMIQDKEVTLEYVSSLDFWYCKRCKANIGGHRSSCSFCKNPREVTEAKQELITYPQPQKTSIPAPLEKQPNQPLRPADKEPEPRKREEGQESRLGHQKREAERYLPPSRREGPTFRRDRERESWSGETRQDGESKTIMLKRIYRSTPPEVIVEVLEPYVRLTTANVRIIKNRTGPMGHTYGFIDLDSHAEALRVVKILQNLDPPFSIDGKMVAVNLATGKRRNDSGDHSDHMHYYQGKKYFRDRRGGGRNSDWSSDTNRQGQQSSSDCYIYDSATGYYYDPLAGTYYDPNTQQEVYVPQDPGLPEEEEIKEKKPTSQGKSSSKKEMSKRDGKEKKDRGVTRFQENASEGKAPAEDVFKKPLPPTVKKEESPPPPKVVNPLIGLLGEYGGDSDYEEEEEEEQTPPPQPRTAQPQKREEQTKKENEEDKLTDWNKLACLLCRRQFPNKEVLIKHQQLSDLHKQNLEIHRKIKQSEQELAYLERREREGKFKGRGNDRREKLQSFDSPERKRIKYSRETDSDRKLVDKEDIDTSSKGGCVQQATGWRKGTGLGYGHPGLASSEEAEGRMRGPSVGASGRTSKRQSNETYRDAVRRVMFARYKELD.

Disordered stretches follow at residues 1–391 (MWGD…EGGL) and 413–454 (LPGS…EEKP). At Ser17 the chain carries Phosphoserine. Lys36 is covalently cross-linked (Glycyl lysine isopeptide (Lys-Gly) (interchain with G-Cter in SUMO2)). Positions 79–97 (DGPHGDYRGGEGPGHDFRG) are enriched in basic and acidic residues. The segment covering 98–114 (GDFSSSDFQSRDSSQLD) has biased composition (low complexity). 2 stretches are compositionally biased toward basic and acidic residues: residues 115–131 (FRGR…REGP) and 145–237 (YRGR…DFRG). Ser240 bears the Phosphoserine mark. 2 stretches are compositionally biased toward basic and acidic residues: residues 245–286 (LDFR…REMP) and 301–323 (QDRE…HTIE). A Glycyl lysine isopeptide (Lys-Gly) (interchain with G-Cter in SUMO2) cross-link involves residue Lys331. Residues 332-354 (GEFEHSETREGETQGVAFEHESP) are compositionally biased toward basic and acidic residues. Position 344 is a phosphothreonine (Thr344). The span at 356-365 (DFQNSQSPVQ) shows a compositional bias: polar residues. Phosphoserine occurs at positions 360 and 362. Basic and acidic residues-rich tracts occupy residues 366 to 391 (DQDK…EGGL) and 431 to 454 (KTAR…EEKP). Residues Lys386, Lys453, Lys469, and Lys569 each participate in a glycyl lysine isopeptide (Lys-Gly) (interchain with G-Cter in SUMO2) cross-link. Positions 456–536 (RLIRLSGVPE…KEVTLEYVSS (81 aa)) constitute an RRM domain. Disordered stretches follow at residues 574 to 654 (TYPQ…QDGE), 741 to 787 (KRRN…QSSS), and 827 to 948 (EEEI…EEDK). Composition is skewed to basic and acidic residues over residues 597 to 654 (PADK…QDGE) and 742 to 754 (RRND…DHMH). The segment covering 772–787 (SDWSSDTNRQGQQSSS) has biased composition (polar residues). A compositionally biased stretch (basic and acidic residues) spans 843–860 (SKKEMSKRDGKEKKDRGV). Residues Lys871, Lys879, and Lys887 each participate in a glycyl lysine isopeptide (Lys-Gly) (interchain with G-Cter in SUMO2) cross-link. Residue Ser891 is modified to Phosphoserine. Residues 910–922 (GDSDYEEEEEEEQ) are compositionally biased toward acidic residues. Residues 934-948 (QKREEQTKKENEEDK) show a composition bias toward basic and acidic residues. Glycyl lysine isopeptide (Lys-Gly) (interchain with G-Cter in SUMO2) cross-links involve residues Lys935, Lys948, Lys991, and Lys1019. Over residues 1004-1051 (EREGKFKGRGNDRREKLQSFDSPERKRIKYSRETDSDRKLVDKEDIDT) the composition is skewed to basic and acidic residues. Residues 1004–1106 (EREGKFKGRG…RTSKRQSNET (103 aa)) form a disordered region. A phosphoserine mark is found at Ser1022 and Ser1025. Residues Lys1042, Lys1046, and Lys1066 each participate in a glycyl lysine isopeptide (Lys-Gly) (interchain with G-Cter in SUMO2) cross-link. A G-patch domain is found at 1051-1097 (TSSKGGCVQQATGWRKGTGLGYGHPGLASSEEAEGRMRGPSVGASGR).

In terms of assembly, may interact with FAM168B. In terms of tissue distribution, ubiquitous in adults.

The protein resides in the nucleus. In terms of biological role, specifically binds poly(G) RNA homopolymers in vitro. The chain is RNA-binding protein 6 (RBM6) from Homo sapiens (Human).